Reading from the N-terminus, the 202-residue chain is Probable GTP-binding protein EngB (202 aa).

An EngB-type G domain is found at 26 to 200; that stretch reads VSKEIAFTGS…KAQLDSWFSI (175 aa). Residues 34-41, 61-65, 79-82, 146-149, and 179-181 each bind GTP; these read GSSNVGKS, GSTKT, DLPG, NKAD, and FSS. Mg(2+)-binding residues include serine 41 and threonine 63.

It belongs to the TRAFAC class TrmE-Era-EngA-EngB-Septin-like GTPase superfamily. EngB GTPase family. The cofactor is Mg(2+).

Its function is as follows. Necessary for normal cell division and for the maintenance of normal septation. This Baumannia cicadellinicola subsp. Homalodisca coagulata protein is Probable GTP-binding protein EngB.